The chain runs to 433 residues: MSISIETLEGLQRRVTLTVNANKIEAAYKEQLKDYAKNAHVDGFRKGKVPRSIIEQRFGLAARQEVLSEEMQRTFFDAVISEKINLAGRPTFTPNNYQLGQDFSFTATFEVFPEVELKGLENIEVEKPVVEITTADIDKMIEVLRKQQATWAESDAAATANDRVIIDFVGYIDGAEFEGGKATEFTLNMGQGSMIPGFEEGIVGHKAGEQFDIDVTFPEEYHAENLKGKAAKFAITLNKVENMILPELTEEFVKKFGTAKTVEELRAEIEKNMQRELKNAVTARIKNQVINGLVTQNDIEVPVAAIAEEIEVLRRQAVQRFGGKPEMAAQLPSELFEADAKRRVQVGLLLSTVIASNEIKVDEQRVQQTIADIASAYEQPAEVIAHYAKNQRLTDNIRNVVLEEQAVEIVLEKAKVTEKTHSFDEIMAQQAQG.

Positions N161–P246 constitute a PPIase FKBP-type domain.

Belongs to the FKBP-type PPIase family. Tig subfamily.

It localises to the cytoplasm. It carries out the reaction [protein]-peptidylproline (omega=180) = [protein]-peptidylproline (omega=0). Its function is as follows. Involved in protein export. Acts as a chaperone by maintaining the newly synthesized protein in an open conformation. Functions as a peptidyl-prolyl cis-trans isomerase. This Haemophilus ducreyi (strain 35000HP / ATCC 700724) protein is Trigger factor.